The following is a 1008-amino-acid chain: MEIAISYKPNPLISSSTQLLKRSKSFGLVRFPAKYGLGATRKKQLFRVYASESSSGSSSNSDGGFSWVRLAQSIRLGAERIGEKIGESVKTEIGFDSEEASGRVNEYVARVKDSVHKGHHELTRFKNETVPSFIDWNKWEHWKDIRNWDGKRVAALFIYAFALLLSCQRVYVAIQAPRVERERRELTESFMEALIPEPSPGNIEKFKRNMWRKATPKGLKLKRFIEAPDGTLVHDSSYVGENAWDDDLETTEGSLKKIIGRNARIQTEAKKKLSQDLGVSGEIGDSVGNWRERLATWKEMLEREKLSEQLNSSAAKYVVEFDMKEVEKSLREDVIGRTSETEGTRALWISKRWWRYRPKLPYTYFLQKLDSSEVAAVVFTEDLKRLYVTMKEGFPLEYIVDIPLDPYLFETICNAGVEVDLLQKRQIHYFMKVFIALLPGILILWFIRESAMLLLITSKRFLYKKYNQLFDMAYAENFILPVGDVSETKSMYKEVVLGGDVWDLLDELMIYMGNPMQYYEKDVAFVRGVLLSGPPGTGKTLFARTLAKESGLPFVFASGAEFTDSEKSGAAKINEMFSIARRNAPAFVFVDEIDAIAGRHARKDPRRRATFEALIAQLDGEKEKTGIDRFSLRQAVIFICATNRPDELDLEFVRSGRIDRRLYIGLPDAKQRVQIFGVHSAGKNLAEDIDFGKLVFRTVGFSGADIRNLVNEAAIMSVRKGRSYIYQQDIVDVLDKQLLEGMGVLLTEEEQQKCEQSVSYEKKRLLAVHEAGHIVLAHLFPRFDWHAFSQLLPGGKETAVSVFYPREDMVDQGYTTFGYMKMQMVVAHGGRCAERVVFGDNVTDGGKDDLEKITKIAREMVISPQSARLGLTQLVKKIGMVDLPDNPDGELIKYRWDHPHVMPAEMSVEVSELFTRELTRYIEETEELAMNALRANRHILDLITRELLEKSRITGLEVEEKMKDLSPLMFEDFVKPFQINPDDEELLPHKDRVSYQPVDLRAAPLHRS.

A chloroplast-targeting transit peptide spans 1-49 (MEIAISYKPNPLISSSTQLLKRSKSFGLVRFPAKYGLGATRKKQLFRVY). Transmembrane regions (helical) follow at residues 154-174 (AALFIYAFALLLSCQRVYVAI) and 427-447 (IHYFMKVFIALLPGILILWFI). Residue 533 to 540 (GPPGTGKT) participates in ATP binding. Histidine 769 lines the Zn(2+) pocket. The active site involves glutamate 770. Zn(2+) is bound by residues histidine 773 and aspartate 849.

In the N-terminal section; belongs to the AAA ATPase family. This sequence in the C-terminal section; belongs to the peptidase M41 family. Requires Zn(2+) as cofactor.

The protein localises to the plastid. It localises to the chloroplast thylakoid membrane. Probable ATP-dependent zinc metallopeptidase. This Arabidopsis thaliana (Mouse-ear cress) protein is ATP-dependent zinc metalloprotease FTSH 12, chloroplastic (FTSH12).